The primary structure comprises 210 residues: Thymidylate kinase (210 aa).

ATP is bound at residue Gly10–Ser17.

It belongs to the thymidylate kinase family.

The enzyme catalyses dTMP + ATP = dTDP + ADP. Phosphorylation of dTMP to form dTDP in both de novo and salvage pathways of dTTP synthesis. The protein is Thymidylate kinase of Pseudomonas aeruginosa (strain LESB58).